A 1257-amino-acid chain; its full sequence is ATP-binding cassette sub-family B member 5 (1257 aa).

Residues 1 to 24 form a disordered region; it reads MENSERAEEMQENYQRNGTAEEQP. N-linked (GlcNAc...) asparagine glycosylation occurs at N17. A helical transmembrane segment spans residues 49–69; sequence ILGILASLVNGACLPLMPLVL. The ABC transmembrane type-1 1 domain maps to 49–350; that stretch reads ILGILASLVN…AAVPHFETFA (302 aa). N85 and N91 each carry an N-linked (GlcNAc...) asparagine glycan. The next 5 helical transmembrane spans lie at 110–130, 181–201, 203–223, 294–314, and 322–342; these read YVGI…LWII, KIAL…VGLV, GWKL…SAAA, VYFF…SLIL, and IGTV…IGAA. N-linked (GlcNAc...) asparagine glycosylation is found at N371, N390, and N423. Positions 386–622 constitute an ABC transporter 1 domain; that stretch reads VEFKNVSFNY…RGLYYSLVMS (237 aa). An ATP-binding site is contributed by 421-428; it reads GLNGSGKS. The next 2 helical transmembrane spans lie at 693–713 and 737–757; these read VLGT…SIIF and MIFV…GLFY. One can recognise an ABC transmembrane type-1 2 domain in the interval 693 to 980; sequence VLGTLASVLN…TLVLAPEYSK (288 aa). Residues N789 and N819 are each glycosylated (N-linked (GlcNAc...) asparagine). Residues 827–847 traverse the membrane as a helical segment; the sequence is VIISFIYGWEMTFLILSIAPV. N910 carries N-linked (GlcNAc...) asparagine glycosylation. 2 helical membrane passes run 917 to 937 and 954 to 974; these read IIGS…AAGF and MFIV…TLVL. Residues 1015–1253 enclose the ABC transporter 2 domain; that stretch reads LEFREVSFFY…RDIYFKLVNA (239 aa). Residue 1050–1057 coordinates ATP; sequence GSSGCGKS. N-linked (GlcNAc...) asparagine glycans are attached at residues N1104 and N1188.

The protein belongs to the ABC transporter superfamily. ABCB family. Multidrug resistance exporter (TC 3.A.1.201) subfamily. Expressed by CD133-expressing progenitor cells among epidermal melanocytes (at protein level). Widely expressed with specific expression in pigment cells. Highly expressed in several malignant tissues: highly expressed in clinical melanomas, with low expression in normal skin. In melanoma, marks malignant melanoma-initiating cells (MMIC), in which clinical virulence resides as a consequence of unlimited self-renewal capacity, resulting in inexorable tumor progression and metastasis. Also highly expressed in a number of leukemia cells. Expressed in basal limbal epithelium.

It is found in the cell membrane. The enzyme catalyses daunorubicin(in) + ATP + H2O = daunorubicin(out) + ADP + phosphate + H(+). In terms of biological role, energy-dependent efflux transporter responsible for decreased drug accumulation in multidrug-resistant cells. Specifically present in limbal stem cells, where it plays a key role in corneal development and repair. The chain is ATP-binding cassette sub-family B member 5 from Homo sapiens (Human).